The chain runs to 401 residues: Nodal homolog 3-A (401 aa).

Positions 1–18 (MAFLNLFFCLVFISPLMA) are cleaved as a signal peptide. Residues 19–274 (MPPVLQGRKS…KVNGFRRLRR (256 aa)) constitute a propeptide that is removed on maturation. Residues Asn-168, Asn-337, Asn-341, and Asn-344 are each glycosylated (N-linked (GlcNAc...) asparagine). 2 disulfide bridges follow: Cys-299-Cys-365 and Cys-328-Cys-396.

The protein belongs to the TGF-beta family. In terms of assembly, monomer. The propeptide region interacts with bmp4 in a non-covalent manner. In terms of tissue distribution, expressed in the epithelial layer of the Spemann organizer during gastrulation.

The protein localises to the secreted. Its function is as follows. Exhibits mesoderm-dorsalizing activity and neural-inducing activity, but lacks mesoderm-inducing activity. Regulates the expression of specific mesodermal and neural genes. Induces convergent extension movements at the embryonic midline by activating the fgf signaling pathway to induce t/bra expression in the organizer region. Acts with wnt11 to induce Spemann organizer cells and induce axis formation. The unprocessed protein antagonizes bmp-signaling. In Xenopus laevis (African clawed frog), this protein is Nodal homolog 3-A (nodal3-a).